A 65-amino-acid chain; its full sequence is MPKMKTKRAAAKRFKVTGTGKLKRAKAFKSHILTKKSRKTKRNLRKAGYVSESQEKVMKKVLPYL.

Belongs to the bacterial ribosomal protein bL35 family.

This Clostridium botulinum (strain Loch Maree / Type A3) protein is Large ribosomal subunit protein bL35.